Reading from the N-terminus, the 356-residue chain is Nicotinate-nucleotide--dimethylbenzimidazole phosphoribosyltransferase (356 aa).

Glu317 (proton acceptor) is an active-site residue.

It belongs to the CobT family. As to quaternary structure, homodimer.

The catalysed reaction is 5,6-dimethylbenzimidazole + nicotinate beta-D-ribonucleotide = alpha-ribazole 5'-phosphate + nicotinate + H(+). It functions in the pathway nucleoside biosynthesis; alpha-ribazole biosynthesis; alpha-ribazole from 5,6-dimethylbenzimidazole: step 1/2. In terms of biological role, catalyzes the synthesis of alpha-ribazole-5'-phosphate from nicotinate mononucleotide (NAMN) and 5,6-dimethylbenzimidazole (DMB). In Salmonella paratyphi C (strain RKS4594), this protein is Nicotinate-nucleotide--dimethylbenzimidazole phosphoribosyltransferase.